We begin with the raw amino-acid sequence, 805 residues long: Chloride channel protein (805 aa).

Topologically, residues 1 to 48 (MSHEKNEASGYPEAQSWKSQEAMLGARTEVSRWRAVKNCLYRHLVKVL) are cytoplasmic. 2 consecutive transmembrane segments (helical) span residues 49-86 (GEDW…LFAL) and 93-116 (LQYL…CQIV). Residues 122 to 126 (GSGIP) carry the Selectivity filter part_1 motif. Ser-123 provides a ligand contact to chloride. An intramembrane region (helical) is located at residues 125–132 (IPELKTII). Transmembrane regions (helical) follow at residues 141–159 (LTLR…ALSA) and 166–184 (EGPF…NQLL). The Selectivity filter part_2 signature appears at 164 to 168 (GKEGP). Intramembrane regions (helical) lie at residues 201 to 213 (ILTV…ISCC) and 217 to 225 (PLAGVLFSI). Transmembrane regions (helical) follow at residues 237-256 (YWRG…VLSV), 283-311 (MPAF…IVFM), and 320-339 (ILKK…LATL). Asn-365 carries an N-linked (GlcNAc...) asparagine glycan. The next 2 helical transmembrane spans lie at 388–408 (LNIF…AALA) and 416–439 (GAFV…MALL). The Selectivity filter part_3 motif lies at 416–420 (GAFVP). Residue Phe-418 participates in chloride binding. Residues 456 to 470 (GEYAVIGAAAMTGAV) constitute an intramembrane region (helical). Positions 471-472 (TH) form an intramembrane region, note=Loop between two helices. The segment at residues 473–484 (AVSTAVICFELT) is an intramembrane region (helical). Positions 485-489 (GQISH) form an intramembrane region, note=Loop between two helices. The helical transmembrane segment at 490–507 (VLPMMVAVILANMVAQGL) threads the bilayer. Topologically, residues 508 to 805 (QPSLYDSIIQ…RTATSNSSGK (298 aa)) are cytoplasmic. Tyr-512 is a chloride binding site. In terms of domain architecture, CBS 1 spans 543–601 (MVRDVTSIASTSTYGDLLHVLRQTKLKFFPFVDTPDTNTLLGSIDRTEVEGLLQRRISA). Disordered stretches follow at residues 606-625 (PAAA…GASF) and 653-684 (KVQT…QKGT). One can recognise a CBS 2 domain in the interval 719-776 (IDQSPFQLVEGTSLQKTHTLFSLLGLDRAYVTSMGKLVGVVALAEIQAAIEGSYQKGF).

The protein belongs to the chloride channel (TC 2.A.49) family. ClC-0 subfamily. Homodimer. Each subunit contains a channel ('Double barreled channel').

It localises to the membrane. Voltage-gated chloride channel. This channel is thought to ensure the high conductance of the non-innervated membrane of the electrocyte necessary for efficient current generation caused by sodium influx through the acetylcholine receptor at the innervated membrane. This chain is Chloride channel protein, found in Torpedo marmorata (Marbled electric ray).